We begin with the raw amino-acid sequence, 166 residues long: MYCPFCRNPDSRVVDSRMADDGSSIRRRRQCPECGRRFTTVETTSLSVIKRSGVGEPFSRIKVISGVRKACQGRPVTEDDLAMLAQEVEENIRSSGAAEIDAHEVGLAILGPLRKLDEVAYLRFASVYQAFESLEDFESAISLLRHEAEAAKAGAKKATGSEKSQL.

A zinc finger lies at 3-34 (CPFCRNPDSRVVDSRMADDGSSIRRRRQCPEC). The 91-residue stretch at 46–136 (LSVIKRSGVG…VYQAFESLED (91 aa)) folds into the ATP-cone domain.

It belongs to the NrdR family. Zn(2+) serves as cofactor.

Functionally, negatively regulates transcription of bacterial ribonucleotide reductase nrd genes and operons by binding to NrdR-boxes. In Paenarthrobacter aurescens (strain TC1), this protein is Transcriptional repressor NrdR.